A 539-amino-acid polypeptide reads, in one-letter code: Diacylglycerol O-acyltransferase 1 (539 aa).

A disordered region spans residues 1-104 (MAISDMPEST…NDGGEKIANG (104 aa)). The span at 33-52 (TETTEVSDSNSKTTDPDSGN) shows a compositional bias: polar residues. Over residues 56–80 (ESVRVRDSSTDESLARKSCEDDGSR) the composition is skewed to basic and acidic residues. Helical transmembrane passes span 143–163 (HAGLFNLCIVVLVAVNSRLII), 187–207 (WPLLMCCLTLPIFPAAAFVVE), 219–239 (VVLLLHFIITTAALLYPVFVI), 244–264 (SVVLSGVTLMLFACIVWLKLV), 294–314 (YPYSVSFKSLAYFMVAPTLCY), 334–354 (VKLIIFTGVMGFIIEQYINPI), and 383–403 (VWLCMFYCFFHLWLNILAELL). The FYXDWWN motif signature appears at 410-416 (FYKDWWN). 3 consecutive transmembrane segments (helical) span residues 451–471 (GVAILIAFFVSAIFHELCIAV), 473–493 (CHIFKLWAFIGIMCQVPLVLI), and 506–526 (VGNMIFWFFFCILGQPMCVLL). His-465 is a catalytic residue.

Belongs to the membrane-bound acyltransferase family. Sterol o-acyltransferase subfamily.

It localises to the endoplasmic reticulum membrane. The catalysed reaction is an acyl-CoA + a 1,2-diacyl-sn-glycerol = a triacyl-sn-glycerol + CoA. It participates in glycerolipid metabolism; triacylglycerol biosynthesis. In terms of biological role, major contributor to triacylglycerol (TAG) synthesis and oil accumulation in developing seeds. Catalyzes the acylation of the sn-3 hydroxy group of sn-1,2-diacylglycerol using acyl-CoA. Has a marked preference for oleoyl-CoA as substrate. The chain is Diacylglycerol O-acyltransferase 1 from Corylus americana (American hazelnut).